Reading from the N-terminus, the 572-residue chain is Nuclear hormone receptor family member nhr-25 (572 aa).

A DNA-binding region (nuclear receptor) is located at residues 15–90; sequence GEMCPVCGDR…MGMKMEAVRA (76 aa). NR C4-type zinc fingers lie at residues 18–38 and 54–78; these read CPVCGDRVSGYHYGLLTCESC and CSAEANCHVDRTCRKRCPSCRFQKC. An NR LBD domain is found at 307–567; sequence PTEKTVDHFY…PTPQATYTAV (261 aa).

This sequence belongs to the nuclear hormone receptor family. In terms of assembly, interacts with lin-39. Interacts with nob-1. In terms of tissue distribution, expressed in the epidermis, the developing somatic gonad, and a subset of other epithelial cells.

It is found in the nucleus. In terms of biological role, orphan nuclear receptor and probable transcription activator, required during development. Plays a role in male tail tip morphogenesis regulating the expression of the transcription factor dmd-3 in a negative feedback loop. Regulates vulval precursor cell (VPC) differentiation, in concert with homeobox protein lin-39. Involved in promoting embryogenesis, in concert with homeobox protein nob-1. May play a role in modulation of lifespan and immunity. This chain is Nuclear hormone receptor family member nhr-25, found in Caenorhabditis elegans.